The primary structure comprises 447 residues: Dirigent protein 10 (447 aa).

The signal sequence occupies residues Met1–Ala21. Residues Ser74 to Thr85 show a composition bias toward gly residues. The tract at residues Ser74 to Thr123 is disordered. Over residues Gly86 to Ser107 the composition is skewed to low complexity.

This sequence belongs to the plant dirigent protein family. As to quaternary structure, homodimer. In roots, mostly detected in root endodermis and quiescent center, and, to a lower extent, in root stele and cortex. Expressed in root vascular cylinder, flowers, siliques, cotyledon and leaf veins, and leaf margins. Present in the basal region of rosette leaf trichomes and in developing xylem.

Its subcellular location is the secreted. The protein resides in the extracellular space. The protein localises to the apoplast. Its function is as follows. Dirigent proteins impart stereoselectivity on the phenoxy radical-coupling reaction, yielding optically active lignans from two molecules of coniferyl alcohol in the biosynthesis of lignans, flavonolignans, and alkaloids and thus plays a central role in plant secondary metabolism. Regulates suberin accumulation in roots. The sequence is that of Dirigent protein 10 (DIR10) from Arabidopsis thaliana (Mouse-ear cress).